Here is a 556-residue protein sequence, read N- to C-terminus: Glutamine--tRNA ligase (556 aa).

The short motif at 34-44 is the 'HIGH' region element; sequence PEPNGYLHIGH. ATP is bound by residues 35–37 and 41–47; these read EPN and HIGHAKS. L-glutamine-binding residues include D67 and Y212. ATP contacts are provided by residues T231, 261 to 262, and 269 to 271; these read RL and MSK. A 'KMSKS' region motif is present at residues 268-272; sequence VMSKR.

Belongs to the class-I aminoacyl-tRNA synthetase family. In terms of assembly, monomer.

It localises to the cytoplasm. It carries out the reaction tRNA(Gln) + L-glutamine + ATP = L-glutaminyl-tRNA(Gln) + AMP + diphosphate. This Vibrio vulnificus (strain YJ016) protein is Glutamine--tRNA ligase.